The sequence spans 371 residues: MNKMNRKFSKLLKNPHIFFRDFLNKKYPIKNTELPFSESEEANLIEANQKLDKIIQKNTLQQANIDVVFTWVDGSDPSWQAKYSQYAPNYQAKSALYATDIARFEDHNELYYSVHAVLKYMPWVRHIFIITDNQKPKWLDETRQEKITLIDHQDIIDKEYLPTFNSHVIEAFLHKIPNLSENFIYFNDDVFIARELQAEHFFQANGIASIFVSEKSLSKMRDKGIITPTLSASEYSIRLLNKYYDTNIDSPLVHTYIPLKKSMYELAWLRYEKAILGFLPNKLRTNNDLNFANFLIPWLMYFEGKAMPKIDICYYFNIRSPNAISLYKKLLLKQQMGEEPNSFCANDFNSNYSIENYRNNLISTLNNYYKF.

It belongs to the stealth family.

Functionally, part of a capsular polysaccharide synthesis locus. The sequence is that of Capsular polysaccharide phosphotransferase cps12A (cps12A) from Actinobacillus pleuropneumoniae (Haemophilus pleuropneumoniae).